A 178-amino-acid chain; its full sequence is Large ribosomal subunit protein uL6 (178 aa).

The protein belongs to the universal ribosomal protein uL6 family. Part of the 50S ribosomal subunit.

Functionally, this protein binds to the 23S rRNA, and is important in its secondary structure. It is located near the subunit interface in the base of the L7/L12 stalk, and near the tRNA binding site of the peptidyltransferase center. In Streptococcus mutans serotype c (strain ATCC 700610 / UA159), this protein is Large ribosomal subunit protein uL6.